A 51-amino-acid chain; its full sequence is MNLIFGFVQLFLYHPLFLLLLYIYLVLFIPLKGAINITNIFPTLLKSIGIK.

The chain crosses the membrane as a helical span at residues 10–29 (LFLYHPLFLLLLYIYLVLFI).

The protein resides in the plastid. It is found in the chloroplast membrane. This is an uncharacterized protein from Anthoceros angustus (Hornwort).